A 469-amino-acid polypeptide reads, in one-letter code: Transcriptional coactivator YAP1 (469 aa).

Positions 1-21 (MEPAQQPPPQPAPQGPAPPSV) are enriched in pro residues. Residues 1 to 47 (MEPAQQPPPQPAPQGPAPPSVSPAGTPAAPPAPPAGHQVVHVRGDSE) are disordered. Residue serine 46 is modified to Phosphoserine. Threonine 48 bears the Phosphothreonine mark. Positions 71-85 (MRLRKLPDSFFKPPE) form a coiled coil. Lysine 75 carries the post-translational modification N6-lactoyllysine. Residues 76 to 99 (LPDSFFKPPEPKSHSRQASTDAGT) are disordered. Residues serine 90 and serine 94 each carry the phosphoserine modification. Phosphothreonine occurs at positions 95 and 104. At serine 112 the chain carries Phosphoserine; by LATS1 and LATS2. A phosphoserine mark is found at serine 113 and serine 116. Residue threonine 136 is modified to Phosphothreonine; by MAPK8 and MAPK9. A Phosphoserine; by LATS1 and LATS2 modification is found at serine 146. WW domains are found at residues 153–186 (VPLP…DPRK) and 212–245 (GPLP…DPRL). The tract at residues 258–290 (SAPVKQPPPLAPQSPQGGVLGGGSSNQQQQIQL) is disordered. A phosphoserine mark is found at serine 271 and serine 320. Positions 273–469 (QGGVLGGGSS…LDKESFLTWL (197 aa)) are transactivation domain. Positions 280-325 (GSSNQQQQIQLQQLQMEKERLRLKQQELFRQELALRSQLPSLEQDG) form a coiled coil. Serine 333 is modified (phosphoserine; by MAPK8 and MAPK9). A compositionally biased stretch (polar residues) spans 345 to 357 (TNSSDPFLNSGTY). The disordered stretch occupies residues 345 to 405 (TNSSDPFLNS…SQSTLPSQQS (61 aa)). 3 positions are modified to phosphoserine: serine 347, serine 348, and serine 354. Serine 363 is modified (phosphoserine; by LATS1 and LATS2). The segment covering 365 to 375 (DSGLSMSSYSI) has biased composition (polar residues). 2 positions are modified to phosphoserine; by CK1: serine 366 and serine 369. Tyrosine 373 carries the phosphotyrosine; by ABL1 modification. Residue threonine 378 is modified to Phosphothreonine; by MAPK8 and MAPK9. Over residues 393-405 (DTISQSTLPSQQS) the composition is skewed to polar residues.

This sequence belongs to the YAP1 family. Part of a complex when phosphorylated that contains DSG3, PKP1, YAP1 and YWHAG; the complex is required for localization of DSG3 and YAP1 to the cell membrane in keratinocytes. Binds to the SH3 domain of the YES kinase. Binds to WBP1 and WBP2. Binds, in vitro, through the WW1 domain, to neural isoforms of ENAH that contain the PPSY motif. The phosphorylated form interacts with YWHAB. Interacts (via WW domains) with LATS1 (via PPxY motif 2). Interacts with LATS2. Interacts (via WW domain 1) with ERBB4 (via PPxY motif 2). Interacts with TEAD1, TEAD2, TEAD3 and TEAD4. Interacts with TP73. Interacts with RUNX1. Interacts with HCK. Interacts (via WW domains) with PTPN14 (via PPxY motif 2); this interaction leads to the cytoplasmic sequestration of YAP1 and inhibits its transcriptional coactivator activity. Interacts (when phosphorylated at Ser-112) with SMAD2, SMAD3 and WWTR1. Interacts with PRRG2 (via cytoplasmic domain). Interacts (via WW domains) with PRRG4 (via cytoplasmic domain). Interacts (phosphorylated) with CLDN18; the interaction sequesters YAP1 away from the nucleus and thereby restricts transcription of YAP1 target genes. Interacts with SMAD1. Interacts with AMOT; the interaction facilitates translocation of YAP1 to the cytoplasm and tight junctions. Interacts with AMOTL2, the interaction is required for ubiquitination of AMOTL2 and localization of YAP1 to tight junctions. Phosphorylated by LATS1 and LATS2; leading to cytoplasmic translocation and inactivation. Phosphorylated by ABL1; leading to YAP1 stabilization, enhanced interaction with TP73 and recruitment onto proapoptotic genes; in response to DNA damage. Phosphorylation at Ser-366 and Ser-369 by CK1 is triggered by previous phosphorylation at Ser-363 by LATS proteins and leads to YAP1 ubiquitination by SCF(beta-TRCP) E3 ubiquitin ligase and subsequent degradation. Phosphorylated at Thr-104, Thr-136, Ser-333 and Thr-378 by MAPK8/JNK1 and MAPK9/JNK2, which is required for the regulation of apoptosis by YAP1. Post-translationally, lactylation by AARS1 promotes nuclear localization and stabilization of YAP1, leading to increased Hippo signaling pathway. Delactylated by SIRT1. In terms of processing, ubiquitinated by SCF(beta-TRCP) E3 ubiquitin ligase. Highly specific to cortical neurons.

Its subcellular location is the cytoplasm. It is found in the nucleus. The protein localises to the cell junction. The protein resides in the tight junction. It localises to the cell membrane. Its function is as follows. Transcriptional regulator with dual roles as a coactivator and corepressor. Critical downstream regulatory target in the Hippo signaling pathway, crucial for organ size control and tumor suppression by restricting proliferation and promoting apoptosis. The Hippo signaling pathway core involves a kinase cascade featuring STK3/MST2 and STK4/MST1, along with its regulatory partner SAV1, which phosphorylates and activates LATS1/2 in complex with their regulatory protein, MOB1. This activation leads to the phosphorylation and inactivation of the YAP1 oncoprotein and WWTR1/TAZ. Phosphorylation of YAP1 by LATS1/2 prevents its nuclear translocation, thereby regulating the expression of its target genes. The transcriptional regulation of gene expression requires TEAD transcription factors and modulates cell growth, anchorage-independent growth, and induction of epithelial-mesenchymal transition (EMT). Plays a key role in tissue tension and 3D tissue shape by regulating the cortical actomyosin network, acting via ARHGAP18, a Rho GTPase activating protein that suppresses F-actin polymerization. It also suppresses ciliogenesis by acting as a transcriptional corepressor of TEAD4 target genes AURKA and PLK1. In conjunction with WWTR1, regulates TGFB1-dependent SMAD2 and SMAD3 nuclear accumulation. Synergizes with WBP2 to enhance PGR activity. Attenuates p73-mediated cell death signaling in transcriptional repression-induced atypical death (TRIAD) of neurons. This is Transcriptional coactivator YAP1 (Yap1) from Rattus norvegicus (Rat).